We begin with the raw amino-acid sequence, 495 residues long: Glutamate--tRNA ligase (495 aa).

A 'HIGH' region motif is present at residues 14 to 24; sequence PSPTGYLHIGS. A 'KMSKS' region motif is present at residues 255 to 259; the sequence is KLSKR. ATP is bound at residue Lys-258.

The protein belongs to the class-I aminoacyl-tRNA synthetase family. Glutamate--tRNA ligase type 1 subfamily. As to quaternary structure, monomer.

The protein resides in the cytoplasm. It catalyses the reaction tRNA(Glu) + L-glutamate + ATP = L-glutamyl-tRNA(Glu) + AMP + diphosphate. In terms of biological role, catalyzes the attachment of glutamate to tRNA(Glu) in a two-step reaction: glutamate is first activated by ATP to form Glu-AMP and then transferred to the acceptor end of tRNA(Glu). The polypeptide is Glutamate--tRNA ligase (Herpetosiphon aurantiacus (strain ATCC 23779 / DSM 785 / 114-95)).